Consider the following 165-residue polypeptide: Large ribosomal subunit protein uL11 (165 aa).

Ser38 is modified (phosphoserine). Lys40 is covalently cross-linked (Glycyl lysine isopeptide (Lys-Gly) (interchain with G-Cter in SUMO2)). Lys48 participates in a covalent cross-link: Glycyl lysine isopeptide (Lys-Gly) (interchain with G-Cter in ubiquitin). Lys54 is subject to N6-acetyllysine. Lys83 participates in a covalent cross-link: Glycyl lysine isopeptide (Lys-Gly) (interchain with G-Cter in ubiquitin). Position 165 is a phosphoserine (Ser165).

This sequence belongs to the universal ribosomal protein uL11 family. Component of the large ribosomal subunit. Mature ribosomes consist of a small (40S) and a large (60S) subunit. The 40S subunit contains about 33 different proteins and 1 molecule of RNA (18S). The 60S subunit contains about 49 different proteins and 3 molecules of RNA (28S, 5.8S and 5S). In terms of processing, ubiquitinated at Lys-48 and Lys-83 by RNF14 and RNF25 in response to ribosome collisions (ribosome stalling).

Its subcellular location is the cytoplasm. Its function is as follows. Component of the large ribosomal subunit. The ribosome is a large ribonucleoprotein complex responsible for the synthesis of proteins in the cell. Binds directly to 26S ribosomal RNA. This chain is Large ribosomal subunit protein uL11 (Rpl12), found in Rattus norvegicus (Rat).